Reading from the N-terminus, the 449-residue chain is UDP-N-acetylmuramoylalanine--D-glutamate ligase (449 aa).

ATP is bound at residue 118–124 (GTNGKTT).

The protein belongs to the MurCDEF family.

It is found in the cytoplasm. It carries out the reaction UDP-N-acetyl-alpha-D-muramoyl-L-alanine + D-glutamate + ATP = UDP-N-acetyl-alpha-D-muramoyl-L-alanyl-D-glutamate + ADP + phosphate + H(+). The protein operates within cell wall biogenesis; peptidoglycan biosynthesis. Its function is as follows. Cell wall formation. Catalyzes the addition of glutamate to the nucleotide precursor UDP-N-acetylmuramoyl-L-alanine (UMA). The chain is UDP-N-acetylmuramoylalanine--D-glutamate ligase from Staphylococcus saprophyticus subsp. saprophyticus (strain ATCC 15305 / DSM 20229 / NCIMB 8711 / NCTC 7292 / S-41).